A 261-amino-acid chain; its full sequence is Sepiapterin reductase (261 aa).

NADP(+)-binding positions include 16-22 (GASRGFG), 44-45 (RT), and 71-72 (DL). Residues 158-159 (SL) and Tyr171 contribute to the substrate site. Lys175 lines the NADP(+) pocket. A substrate-binding site is contributed by Gly200. Position 202–207 (202–207 (LDTDMH)) interacts with NADP(+). Asp258 contacts substrate.

The protein belongs to the sepiapterin reductase family. As to quaternary structure, homodimer.

It localises to the cytoplasm. The catalysed reaction is L-erythro-7,8-dihydrobiopterin + NADP(+) = L-sepiapterin + NADPH + H(+). It carries out the reaction (6R)-L-erythro-5,6,7,8-tetrahydrobiopterin + 2 NADP(+) = 6-pyruvoyl-5,6,7,8-tetrahydropterin + 2 NADPH + 2 H(+). Functionally, catalyzes the final one or two reductions in tetra-hydrobiopterin biosynthesis to form 5,6,7,8-tetrahydrobiopterin. This Xenopus tropicalis (Western clawed frog) protein is Sepiapterin reductase (spr).